The primary structure comprises 165 residues: Xanthine-guanine phosphoribosyltransferase (165 aa).

5-phospho-alpha-D-ribose 1-diphosphate-binding positions include 41–42 and 98–106; these read RG and DDLTDTGKT. D99 serves as a coordination point for Mg(2+). Guanine-binding residues include D102 and I145. Xanthine-binding residues include D102 and I145. GMP contacts are provided by residues 102–106 and 144–145; these read DTGKT and WI.

It belongs to the purine/pyrimidine phosphoribosyltransferase family. XGPT subfamily. Homotetramer. Mg(2+) is required as a cofactor.

The protein localises to the cell inner membrane. It catalyses the reaction GMP + diphosphate = guanine + 5-phospho-alpha-D-ribose 1-diphosphate. The enzyme catalyses XMP + diphosphate = xanthine + 5-phospho-alpha-D-ribose 1-diphosphate. The catalysed reaction is IMP + diphosphate = hypoxanthine + 5-phospho-alpha-D-ribose 1-diphosphate. It functions in the pathway purine metabolism; GMP biosynthesis via salvage pathway; GMP from guanine: step 1/1. The protein operates within purine metabolism; XMP biosynthesis via salvage pathway; XMP from xanthine: step 1/1. In terms of biological role, purine salvage pathway enzyme that catalyzes the transfer of the ribosyl-5-phosphate group from 5-phospho-alpha-D-ribose 1-diphosphate (PRPP) to the N9 position of the 6-oxopurines guanine and xanthine to form the corresponding ribonucleotides GMP (guanosine 5'-monophosphate) and XMP (xanthosine 5'-monophosphate), with the release of PPi. To a lesser extent, also acts on hypoxanthine. This is Xanthine-guanine phosphoribosyltransferase from Brucella suis (strain ATCC 23445 / NCTC 10510).